The sequence spans 349 residues: UPF0324 inner membrane protein YeiH (349 aa).

Residues Met-1 to Thr-12 are Periplasmic-facing. A helical transmembrane segment spans residues Met-13–Ala-35. The Cytoplasmic segment spans residues Ile-36–Ala-38. A helical membrane pass occupies residues Val-39–Val-61. Residues Tyr-62–Asp-99 lie on the Periplasmic side of the membrane. A helical transmembrane segment spans residues Val-100–Leu-122. At Gly-123–Arg-131 the chain is on the cytoplasmic side. A helical transmembrane segment spans residues His-132 to Ala-151. The Periplasmic segment spans residues Thr-152 to Lys-162. Residues Val-163–Tyr-185 form a helical membrane-spanning segment. Topologically, residues Pro-186–Lys-261 are cytoplasmic. The helical transmembrane segment at Ile-262–Pro-284 threads the bilayer. Residues Lys-285 to Met-290 lie on the Periplasmic side of the membrane. A helical transmembrane segment spans residues Leu-291–Ser-313. The Cytoplasmic portion of the chain corresponds to Ala-314 to Pro-322. The helical transmembrane segment at Leu-323–His-345 threads the bilayer. At Ser-346–Ala-349 the chain is on the periplasmic side.

It belongs to the UPF0324 family.

The protein localises to the cell inner membrane. This is UPF0324 inner membrane protein YeiH (yeiH) from Salmonella typhi.